Reading from the N-terminus, the 178-residue chain is Large ribosomal subunit protein uL6 (178 aa).

The protein belongs to the universal ribosomal protein uL6 family. As to quaternary structure, part of the 50S ribosomal subunit.

Its function is as follows. This protein binds to the 23S rRNA, and is important in its secondary structure. It is located near the subunit interface in the base of the L7/L12 stalk, and near the tRNA binding site of the peptidyltransferase center. In Streptococcus pneumoniae (strain 70585), this protein is Large ribosomal subunit protein uL6.